The primary structure comprises 318 residues: MELLEGSRRSDAMAVLRDACENWGFFELLNHGISHEPNEQSETVNKEHYREHYRRFREQRFKEFAAKTLDSGENVDGDNLDWESTFFLRHLPTSNISQVPDLDEDCGSTMKEFALGLEKLAERLLDLLCENLGLEKGYLKRVFCGGSDGLPTFGTKVSNYPPCPKPELIKGLRAHTDAGGIILLFQDDTVSGLQLLKDEEWIDVPPMRHSIVVNIGDQLEVITNGKYKSVMHRVVAQTNGNRMSIASFYNPGSDAVIFPAPELVEKEAAEKKKETYPKFVFEDYMKLYVRQKFEAKEPRFEAMKTMDAVISSQPIPTA.

One can recognise a Fe2OG dioxygenase domain in the interval 151–251; the sequence is PTFGTKVSNY…RMSIASFYNP (101 aa). Positions 175, 177, and 232 each coordinate Fe cation.

Belongs to the iron/ascorbate-dependent oxidoreductase family. Fe cation is required as a cofactor.

It catalyses the reaction 1-aminocyclopropane-1-carboxylate + L-ascorbate + O2 = ethene + L-dehydroascorbate + hydrogen cyanide + CO2 + 2 H2O. Its pathway is alkene biosynthesis; ethylene biosynthesis via S-adenosyl-L-methionine; ethylene from S-adenosyl-L-methionine: step 2/2. The sequence is that of 1-aminocyclopropane-1-carboxylate oxidase (ACO) from Dendrobium crumenatum (Tropical pigeon orchid).